Consider the following 269-residue polypeptide: Oligoribonuclease, mitochondrial (269 aa).

One can recognise an Exonuclease domain in the interval 55–227 (LVWIDCEMTG…SDIKESIAQL (173 aa)). Residue tyrosine 184 is part of the active site. Residues 240-269 (ETESVESIGSEQPESPSSSTSSLKRQRTDF) are disordered. A compositionally biased stretch (low complexity) spans 245–261 (ESIGSEQPESPSSSTSS).

This sequence belongs to the oligoribonuclease family.

It is found in the mitochondrion. Its function is as follows. 3'-to-5' exoribonuclease specific for small oligoribonucleotides. In Saccharomyces cerevisiae (strain ATCC 204508 / S288c) (Baker's yeast), this protein is Oligoribonuclease, mitochondrial (REX2).